Consider the following 252-residue polypeptide: Mitochondrial peculiar membrane protein 1 (252 aa).

The tract at residues 230–252 is disordered; it reads TTTTSKGSSPQVKHKVVSVDEDN.

It is found in the mitochondrion membrane. The sequence is that of Mitochondrial peculiar membrane protein 1 (MPM1) from Saccharomyces cerevisiae (strain ATCC 204508 / S288c) (Baker's yeast).